Consider the following 293-residue polypeptide: 33 kDa chaperonin (293 aa).

2 disulfides stabilise this stretch: cysteine 231–cysteine 233 and cysteine 264–cysteine 267.

This sequence belongs to the HSP33 family. Post-translationally, under oxidizing conditions two disulfide bonds are formed involving the reactive cysteines. Under reducing conditions zinc is bound to the reactive cysteines and the protein is inactive.

Its subcellular location is the cytoplasm. In terms of biological role, redox regulated molecular chaperone. Protects both thermally unfolding and oxidatively damaged proteins from irreversible aggregation. Plays an important role in the bacterial defense system toward oxidative stress. The chain is 33 kDa chaperonin from Yersinia pseudotuberculosis serotype O:1b (strain IP 31758).